Here is an 89-residue protein sequence, read N- to C-terminus: MQQEADVNVFQQDLADMKGEHKALEQRVSALERVSDRQDQQIMTLNEKLNKIEENTTWIKRTITGAIITAVSTGIIGGAIAIMYSLLQH.

Residues 63 to 83 (ITGAIITAVSTGIIGGAIAIM) form a helical membrane-spanning segment.

The protein to B.licheniformis xpaF1 and xpaL1.

The protein localises to the cell membrane. Its function is as follows. Associated with cell lysis upon induction of PbsX. This Bacillus subtilis (strain 168) protein is Protein XhlA (xhlA).